We begin with the raw amino-acid sequence, 113 residues long: Large ribosomal subunit protein bL19 (113 aa).

It belongs to the bacterial ribosomal protein bL19 family.

Functionally, this protein is located at the 30S-50S ribosomal subunit interface and may play a role in the structure and function of the aminoacyl-tRNA binding site. This Mycolicibacterium gilvum (strain PYR-GCK) (Mycobacterium gilvum (strain PYR-GCK)) protein is Large ribosomal subunit protein bL19.